Reading from the N-terminus, the 333-residue chain is Foldase protein PrsA (333 aa).

Residues 1-21 (MKKRTIATGLVTLLSIVTLAA) form the signal peptide. A lipid anchor (N-palmitoyl cysteine) is attached at Cys-22. The S-diacylglycerol cysteine moiety is linked to residue Cys-22. The PpiC domain maps to 144–237 (KPEVTAQVIQ…PVYYIVKITK (94 aa)). A disordered region spans residues 296-333 (AASGSGSSGSTTTTTAASSAATTAADDQTTAAETTAAE).

It belongs to the PrsA family.

It is found in the cell membrane. The catalysed reaction is [protein]-peptidylproline (omega=180) = [protein]-peptidylproline (omega=0). In terms of biological role, plays a major role in protein secretion by helping the post-translocational extracellular folding of several secreted proteins. The sequence is that of Foldase protein PrsA from Streptococcus mutans serotype c (strain ATCC 700610 / UA159).